A 218-amino-acid chain; its full sequence is Large ribosomal subunit protein uL3 (218 aa).

Positions 126–170 (HGFSRGPMSHGSKNHREPGSTGAGTTPGRIYPGKRMAGRYGGKKR) are disordered.

It belongs to the universal ribosomal protein uL3 family. In terms of assembly, part of the 50S ribosomal subunit. Forms a cluster with proteins L14 and L19.

In terms of biological role, one of the primary rRNA binding proteins, it binds directly near the 3'-end of the 23S rRNA, where it nucleates assembly of the 50S subunit. This chain is Large ribosomal subunit protein uL3, found in Prochlorococcus marinus (strain MIT 9313).